Reading from the N-terminus, the 421-residue chain is UDP-N-acetylglucosamine 1-carboxyvinyltransferase (421 aa).

22-23 (KN) lines the phosphoenolpyruvate pocket. Arg-92 lines the UDP-N-acetyl-alpha-D-glucosamine pocket. Cys-116 serves as the catalytic Proton donor. Cys-116 is subject to 2-(S-cysteinyl)pyruvic acid O-phosphothioketal. UDP-N-acetyl-alpha-D-glucosamine contacts are provided by residues 121–125 (RPVDQ), Asp-308, and Ile-330.

It belongs to the EPSP synthase family. MurA subfamily.

Its subcellular location is the cytoplasm. The catalysed reaction is phosphoenolpyruvate + UDP-N-acetyl-alpha-D-glucosamine = UDP-N-acetyl-3-O-(1-carboxyvinyl)-alpha-D-glucosamine + phosphate. It functions in the pathway cell wall biogenesis; peptidoglycan biosynthesis. Its function is as follows. Cell wall formation. Adds enolpyruvyl to UDP-N-acetylglucosamine. This chain is UDP-N-acetylglucosamine 1-carboxyvinyltransferase, found in Ralstonia nicotianae (strain ATCC BAA-1114 / GMI1000) (Ralstonia solanacearum).